An 84-amino-acid polypeptide reads, in one-letter code: U4-theraphotoxin-Hhn1b (84 aa).

The N-terminal stretch at 1-22 is a signal peptide; sequence MKVTLTAILTCAAVLVLHTTAA. A propeptide spanning residues 23–47 is cleaved from the precursor; the sequence is EELEESQLMEVGMPDTELAAVDEER. 3 cysteine pairs are disulfide-bonded: C51–C65, C55–C76, and C70–C81.

The protein belongs to the neurotoxin 12 (Hwtx-2) family. 02 (Hwtx-2) subfamily. Expressed by the venom gland.

The protein localises to the secreted. Functionally, postsynaptic neurotoxin. The chain is U4-theraphotoxin-Hhn1b from Cyriopagopus hainanus (Chinese bird spider).